We begin with the raw amino-acid sequence, 104 residues long: ATP-dependent Clp protease adapter protein ClpS (104 aa).

This sequence belongs to the ClpS family. In terms of assembly, binds to the N-terminal domain of the chaperone ClpA.

Involved in the modulation of the specificity of the ClpAP-mediated ATP-dependent protein degradation. This is ATP-dependent Clp protease adapter protein ClpS from Neisseria gonorrhoeae (strain ATCC 700825 / FA 1090).